The chain runs to 27 residues: Secretin (27 aa).

A Leucine amide modification is found at Leu27.

This sequence belongs to the glucagon family.

The protein localises to the secreted. Hormone involved in different processes, such as regulation of the pH of the duodenal content, food intake and water homeostasis. Exerts its biological effects by binding to secretin receptor (SCTR), a G-protein coupled receptor expressed in the basolateral domain of several cells. Acts as a key gastrointestinal hormone by regulating the pH of the duodenal content. Secreted by S cells of the duodenum in the crypts of Lieberkuehn and regulates the pH of the duodenum by (1) inhibiting the secretion of gastric acid from the parietal cells of the stomach and (2) stimulating the production of bicarbonate (NaHCO(3)) from the ductal cells of the pancreas. Production of bicarbonate is essential to neutralize the pH and ensure no damage is done to the small intestine by the gastric acid. In addition to regulating the pH of the duodenal content, plays a central role in diet induced thermogenesis: acts as a non-sympathetic brown fat (BAT) activator mediating prandial thermogenesis, which consequentially induces satiation. Mechanistically, secretin released by the gut after a meal binds to secretin receptor (SCTR) in brown adipocytes, activating brown fat thermogenesis by stimulating lipolysis, which is sensed in the brain and promotes satiation. Also able to stimulate lipolysis in white adipocytes. Also plays an important role in cellular osmoregulation: released into the systemic circulation in response to hyperosmolality and acts at different levels in the hypothalamus, pituitary and kidney to regulate water homeostasis. Also plays a role in the central nervous system, possibly by acting as a neuropeptide hormone: required for hippocampal synaptic function and neural progenitor cells maintenance. In Oryctolagus cuniculus (Rabbit), this protein is Secretin.